We begin with the raw amino-acid sequence, 499 residues long: Serine/threonine protein phosphatase 2A 57 kDa regulatory subunit B' beta isoform (499 aa).

The segment covering 1–13 (MFKKIMKGGHRKP) has biased composition (basic residues). The interval 1–65 (MFKKIMKGGH…PVTATPPPPP (65 aa)) is disordered.

This sequence belongs to the phosphatase 2A regulatory subunit B56 family. In terms of assembly, PP2A consists of a common heteromeric enzyme, composed of a catalytic subunit (subunits C), a constant regulatory subunit (subunit A), and a variety of regulatory subunits such as subunits B (the R2/B/PR55/B55, R3/B''/PR72/PR130/PR59 and R5/B'/B56 families). Interacts with BZR1. Interacts with BRI1. Interacts with SRK2E/OST1. As to expression, expressed ubiquitously, higher levels in cotyledons and flowers.

It is found in the nucleus. It localises to the cytoplasm. Functionally, the B regulatory subunit may modulate substrate selectivity and catalytic activity, and may also direct the localization of the catalytic enzyme to a particular subcellular compartment. Required for the formation of the PP2A holoenzyme that positively regulates brassinosteroid signaling by dephosphorylating and activating BZR1. In Arabidopsis thaliana (Mouse-ear cress), this protein is Serine/threonine protein phosphatase 2A 57 kDa regulatory subunit B' beta isoform (B'BETA).